The primary structure comprises 461 residues: Nucleobindin-1 (461 aa).

A signal peptide spans 1 to 26 (MPPSGPRGTLLLLPLLLLLLLRAVLA). Residues 42–51 (TESPDTGLYY) are O-glycosylated at one site. Ser-86 is subject to Phosphoserine; by FAM20C. At Thr-148 the chain carries Phosphothreonine; by FAM20C. A coiled-coil region spans residues 150–218 (EARDLELLIQ…QQRRHREHPK (69 aa)). A DNA-binding region spans residues 172–218 (HHEEFKRYEMLKEHERRRYLESLGEEQRKEAERKLEEQQRRHREHPK). The segment covering 193 to 210 (SLGEEQRKEAERKLEEQQ) has biased composition (basic and acidic residues). Positions 193–221 (SLGEEQRKEAERKLEEQQRRHREHPKVNV) are disordered. Positions 228–321 (LKEVWEELDG…VTLEEFLAST (94 aa)) are binds to GNAI2 and GNAI3. EF-hand domains are found at residues 240–275 (PNRFNPKTFFILHDINSDGVLDEQELEALFTKELEK) and 292–327 (ERLRMREHVMKNVDTNQDRLVTLEEFLASTQRKEFG). Ca(2+) is bound by residues Asp-253, Asn-255, Asp-257, Glu-264, Asp-305, Asn-307, Asp-309, and Glu-316. Positions 303 to 333 (NVDTNQDRLVTLEEFLASTQRKEFGDTGEGW) match the GBA motif. A coiled-coil region spans residues 341 to 407 (AYTEEELRRF…QRKQQQQQQQ (67 aa)). The tract at residues 368–461 (LSQETEALGR…LPEVEVPQHL (94 aa)) is disordered. The residue at position 369 (Ser-369) is a Phosphoserine; by FAM20C. The span at 437-461 (DQKEVDTSEKKLLERLPEVEVPQHL) shows a compositional bias: basic and acidic residues.

The protein belongs to the nucleobindin family. In terms of assembly, interacts (via GBA motif) with guanine nucleotide-binding protein G(i) alpha subunits GNAI1, GNAI2 and GNAI3 with higher affinity for GNAI1 and GNAI3 than for GNAI2. Preferentially interacts with inactive rather than active GNAI3. Interaction with GNAI3 is inhibited when NUCB1 binds calcium, probably due to a conformational change which renders the GBA motif inaccessible. Post-translationally, O-glycosylated. Expressed both in fetal and adult heart, lung, liver, kidney and brain, and in adult skeletal muscle, placenta and pancreas.

The protein localises to the golgi apparatus. It localises to the cis-Golgi network membrane. The protein resides in the cytoplasm. Its subcellular location is the secreted. Its function is as follows. Major calcium-binding protein of the Golgi which may have a role in calcium homeostasis. Acts as a non-receptor guanine nucleotide exchange factor which binds to and activates alpha subunits of guanine nucleotide-binding proteins (G proteins). The chain is Nucleobindin-1 (NUCB1) from Homo sapiens (Human).